We begin with the raw amino-acid sequence, 83 residues long: U1-theraphotoxin-Hs1f (83 aa).

The N-terminal stretch at 1–21 (MKVTLIAILTCAAVLVLHTTA) is a signal peptide. A propeptide spanning residues 22-48 (AEELEESQLMEVGMPDTELAAVDEERL) is cleaved from the precursor. Cystine bridges form between cysteine 51–cysteine 64, cysteine 55–cysteine 75, and cysteine 69–cysteine 80.

This sequence belongs to the neurotoxin 12 (Hwtx-2) family. 02 (Hwtx-2) subfamily. In terms of tissue distribution, expressed by the venom gland.

It localises to the secreted. Lethal neurotoxin that blocks neuromuscular transmission. This is U1-theraphotoxin-Hs1f from Cyriopagopus schmidti (Chinese bird spider).